A 355-amino-acid chain; its full sequence is Heat-inducible transcription repressor HrcA (355 aa).

The protein belongs to the HrcA family.

Negative regulator of class I heat shock genes (grpE-dnaK-dnaJ and groELS operons). Prevents heat-shock induction of these operons. The polypeptide is Heat-inducible transcription repressor HrcA (Prosthecochloris aestuarii (strain DSM 271 / SK 413)).